Here is a 137-residue protein sequence, read N- to C-terminus: Large ribosomal subunit protein uL16 (137 aa).

The span at 1–19 (MLSPKKVKFRKQQRGRRTG) shows a compositional bias: basic residues. Residues 1 to 20 (MLSPKKVKFRKQQRGRRTGT) are disordered.

It belongs to the universal ribosomal protein uL16 family. As to quaternary structure, part of the 50S ribosomal subunit.

Functionally, binds 23S rRNA and is also seen to make contacts with the A and possibly P site tRNAs. The polypeptide is Large ribosomal subunit protein uL16 (Desulfosudis oleivorans (strain DSM 6200 / JCM 39069 / Hxd3) (Desulfococcus oleovorans)).